Reading from the N-terminus, the 339-residue chain is Ferredoxin--NADP reductase (339 aa).

FAD is bound by residues Glu-35, Gln-43, Tyr-48, Val-88, Phe-122, Asp-287, and Ser-327.

Belongs to the ferredoxin--NADP reductase type 2 family. In terms of assembly, homodimer. FAD is required as a cofactor.

The enzyme catalyses 2 reduced [2Fe-2S]-[ferredoxin] + NADP(+) + H(+) = 2 oxidized [2Fe-2S]-[ferredoxin] + NADPH. In Leuconostoc citreum (strain KM20), this protein is Ferredoxin--NADP reductase.